A 320-amino-acid chain; its full sequence is Replication-associated protein ORF2 (320 aa).

Active-site O-(5'-phospho-DNA)-tyrosine intermediate residues include Tyr188 and Tyr192.

It belongs to the microviridae Rep protein family.

The enzyme catalyses ATP + (deoxyribonucleotide)n-3'-hydroxyl + 5'-phospho-(deoxyribonucleotide)m = (deoxyribonucleotide)n+m + AMP + diphosphate.. Plays an essential role in viral DNA replication. Binds the origin of replication and cleaves the dsDNA replicative form I (RFI) and becomes covalently bound to it via phosphotyrosine bond, generating the dsDNA replicative form II (RFII). In turn, viral DNA replication initiates at the 3'-OH of the cleavage site. After one round of rolling circle synthesis, protein ORF2 is linked to the newly synthesized ssDNA and joins the ends of the displaced strand to generate a circular single-stranded molecule ready to be packed into a virion. The chain is Replication-associated protein ORF2 from Spiroplasma virus 4 (SpV4).